The sequence spans 181 residues: Photosystem I assembly protein Ycf4 (181 aa).

2 helical membrane-spanning segments follow: residues 19 to 39 (YFWA…GISS) and 62 to 82 (VMMF…LTII).

This sequence belongs to the Ycf4 family.

Its subcellular location is the plastid. The protein localises to the chloroplast thylakoid membrane. Functionally, seems to be required for the assembly of the photosystem I complex. The chain is Photosystem I assembly protein Ycf4 from Phaeodactylum tricornutum (strain CCAP 1055/1).